The following is a 245-amino-acid chain: Collagen triple helix repeat-containing protein 1 (245 aa).

An N-terminal signal peptide occupies residues 1-32 (MHPQGRAAPPQLLLGLFLVLLLLLQLSAPISA). A Collagen-like domain is found at 59–92 (QGPAGVPGRDGSPGANGIPGTPGIPGRDGFKGEK). The tract at residues 64-87 (VPGRDGSPGANGIPGTPGIPGRDG) is disordered. An N-linked (GlcNAc...) asparagine glycan is attached at N188.

Post-translationally, N-glycosylated.

Its subcellular location is the secreted. It is found in the extracellular space. The protein localises to the extracellular matrix. May act as a negative regulator of collagen matrix deposition. The polypeptide is Collagen triple helix repeat-containing protein 1 (Cthrc1) (Mus musculus (Mouse)).